A 155-amino-acid polypeptide reads, in one-letter code: DNA gyrase inhibitor (155 aa).

Belongs to the DNA gyrase inhibitor family. In terms of assembly, interacts with DNA gyrase.

The protein resides in the cytoplasm. Inhibits the supercoiling activity of DNA gyrase. Acts by inhibiting DNA gyrase at an early step, prior to (or at the step of) binding of DNA by the gyrase. It protects cells against toxins that target DNA gyrase, by inhibiting activity of these toxins and reducing the formation of lethal double-strand breaks in the cell. The polypeptide is DNA gyrase inhibitor (Edwardsiella piscicida).